Consider the following 100-residue polypeptide: Urease subunit gamma (100 aa).

This sequence belongs to the urease gamma subunit family. Heterotrimer of UreA (gamma), UreB (beta) and UreC (alpha) subunits. Three heterotrimers associate to form the active enzyme.

It is found in the cytoplasm. It catalyses the reaction urea + 2 H2O + H(+) = hydrogencarbonate + 2 NH4(+). The protein operates within nitrogen metabolism; urea degradation; CO(2) and NH(3) from urea (urease route): step 1/1. This is Urease subunit gamma from Alkalilimnicola ehrlichii (strain ATCC BAA-1101 / DSM 17681 / MLHE-1).